The primary structure comprises 106 residues: Malonate decarboxylase acyl carrier protein (106 aa).

The residue at position 28 (Ser-28) is an O-(phosphoribosyl dephospho-coenzyme A)serine.

Belongs to the MdcC family. In terms of processing, covalently binds the prosthetic group of malonate decarboxylase.

It localises to the cytoplasm. Its function is as follows. Subunit of malonate decarboxylase, it is an acyl carrier protein to which acetyl and malonyl thioester residues are bound via a 2'-(5''-phosphoribosyl)-3'-dephospho-CoA prosthetic group and turn over during the catalytic mechanism. The chain is Malonate decarboxylase acyl carrier protein from Stenotrophomonas maltophilia (strain R551-3).